Consider the following 346-residue polypeptide: Methylthioribose-1-phosphate isomerase (346 aa).

Residues 47-49 (RGA), Arg88, and Gln195 each bind substrate. Catalysis depends on Asp236, which acts as the Proton donor. Position 246–247 (246–247 (NK)) interacts with substrate.

It belongs to the eIF-2B alpha/beta/delta subunits family. MtnA subfamily.

The catalysed reaction is 5-(methylsulfanyl)-alpha-D-ribose 1-phosphate = 5-(methylsulfanyl)-D-ribulose 1-phosphate. It participates in amino-acid biosynthesis; L-methionine biosynthesis via salvage pathway; L-methionine from S-methyl-5-thio-alpha-D-ribose 1-phosphate: step 1/6. Catalyzes the interconversion of methylthioribose-1-phosphate (MTR-1-P) into methylthioribulose-1-phosphate (MTRu-1-P). This chain is Methylthioribose-1-phosphate isomerase, found in Maridesulfovibrio salexigens (strain ATCC 14822 / DSM 2638 / NCIMB 8403 / VKM B-1763) (Desulfovibrio salexigens).